The sequence spans 382 residues: 1-deoxy-D-xylulose 5-phosphate reductoisomerase (382 aa).

Residues Ser10, Gly11, Ser12, Ile13, Gly36, Lys37, Asn38, and Asn121 each contribute to the NADPH site. Lys122 is a 1-deoxy-D-xylulose 5-phosphate binding site. Glu123 contributes to the NADPH binding site. Asp147 is a Mn(2+) binding site. Positions 148, 149, 173, and 196 each coordinate 1-deoxy-D-xylulose 5-phosphate. Glu149 is a Mn(2+) binding site. Gly202 provides a ligand contact to NADPH. The 1-deoxy-D-xylulose 5-phosphate site is built by Ser209, Asn214, Lys215, and Glu218. Glu218 contributes to the Mn(2+) binding site.

This sequence belongs to the DXR family. The cofactor is Mg(2+). It depends on Mn(2+) as a cofactor.

The enzyme catalyses 2-C-methyl-D-erythritol 4-phosphate + NADP(+) = 1-deoxy-D-xylulose 5-phosphate + NADPH + H(+). It functions in the pathway isoprenoid biosynthesis; isopentenyl diphosphate biosynthesis via DXP pathway; isopentenyl diphosphate from 1-deoxy-D-xylulose 5-phosphate: step 1/6. Its function is as follows. Catalyzes the NADPH-dependent rearrangement and reduction of 1-deoxy-D-xylulose-5-phosphate (DXP) to 2-C-methyl-D-erythritol 4-phosphate (MEP). This Geobacillus kaustophilus (strain HTA426) protein is 1-deoxy-D-xylulose 5-phosphate reductoisomerase.